A 407-amino-acid chain; its full sequence is Peptidase T (407 aa).

A Zn(2+)-binding site is contributed by histidine 77. Residue aspartate 79 is part of the active site. A Zn(2+)-binding site is contributed by aspartate 138. The active-site Proton acceptor is glutamate 172. The Zn(2+) site is built by glutamate 173, aspartate 195, and histidine 377.

The protein belongs to the peptidase M20B family. Requires Zn(2+) as cofactor.

It localises to the cytoplasm. It carries out the reaction Release of the N-terminal residue from a tripeptide.. Functionally, cleaves the N-terminal amino acid of tripeptides. The polypeptide is Peptidase T (Aeromonas hydrophila subsp. hydrophila (strain ATCC 7966 / DSM 30187 / BCRC 13018 / CCUG 14551 / JCM 1027 / KCTC 2358 / NCIMB 9240 / NCTC 8049)).